A 233-amino-acid polypeptide reads, in one-letter code: Ion-translocating oxidoreductase complex subunit E (233 aa).

The next 5 membrane-spanning stretches (helical) occupy residues 22 to 42 (LLGL…LGLG), 69 to 89 (IPIY…LINA), 93 to 113 (GLYQ…IVVG), 128 to 148 (ALDG…LGSI), and 182 to 202 (PMLL…LLAA).

The protein belongs to the NqrDE/RnfAE family. In terms of assembly, the complex is composed of six subunits: RnfA, RnfB, RnfC, RnfD, RnfE and RnfG.

The protein resides in the cell inner membrane. Functionally, part of a membrane-bound complex that couples electron transfer with translocation of ions across the membrane. The polypeptide is Ion-translocating oxidoreductase complex subunit E (Erwinia tasmaniensis (strain DSM 17950 / CFBP 7177 / CIP 109463 / NCPPB 4357 / Et1/99)).